The following is a 171-amino-acid chain: UPF0398 protein SEQ_1788 (171 aa).

This sequence belongs to the UPF0398 family.

This chain is UPF0398 protein SEQ_1788, found in Streptococcus equi subsp. equi (strain 4047).